Here is a 130-residue protein sequence, read N- to C-terminus: Flagellar assembly factor FliW (130 aa).

It belongs to the FliW family. Interacts with translational regulator CsrA and flagellin(s).

It is found in the cytoplasm. Functionally, acts as an anti-CsrA protein, binds CsrA and prevents it from repressing translation of its target genes, one of which is flagellin. Binds to flagellin and participates in the assembly of the flagellum. In Borreliella burgdorferi (strain ATCC 35210 / DSM 4680 / CIP 102532 / B31) (Borrelia burgdorferi), this protein is Flagellar assembly factor FliW.